The following is an 870-amino-acid chain: Translation initiation factor IF-2 (870 aa).

Positions 49–284 (SFQNSAPAEK…TKRKERPLPE (236 aa)) are disordered. Composition is skewed to basic and acidic residues over residues 70 to 81 (RKNEKKQEDNAG) and 94 to 109 (QNND…RDHS). Low complexity predominate over residues 116-127 (KPKAAALLQQFK). Basic and acidic residues-rich tracts occupy residues 144 to 159 (AKKE…KKEQ) and 168 to 183 (NKES…EKKV). Over residues 254–279 (RKRRKNKNKKRKQEQKPKKQITKRKE) the composition is skewed to basic residues. Residues 371-540 (KRPPVVTIMG…LLQADMMELK (170 aa)) enclose the tr-type G domain. Positions 380 to 387 (GHVDHGKT) are G1. 380 to 387 (GHVDHGKT) contacts GTP. Residues 405-409 (GITQK) form a G2 region. The segment at 426–429 (DTPG) is G3. GTP is bound by residues 426-430 (DTPGH) and 480-483 (NKMD). The interval 480 to 483 (NKMD) is G4. The interval 516–518 (SAR) is G5.

This sequence belongs to the TRAFAC class translation factor GTPase superfamily. Classic translation factor GTPase family. IF-2 subfamily.

Its subcellular location is the cytoplasm. One of the essential components for the initiation of protein synthesis. Protects formylmethionyl-tRNA from spontaneous hydrolysis and promotes its binding to the 30S ribosomal subunits. Also involved in the hydrolysis of GTP during the formation of the 70S ribosomal complex. The protein is Translation initiation factor IF-2 of Lactobacillus helveticus (strain DPC 4571).